The primary structure comprises 312 residues: RNA pseudouridylate synthase domain-containing protein 1 (312 aa).

N-acetylmethionine is present on M1. D67 is an active-site residue. The interval 256–298 (ATPDPDPEDRGPRPGSPSALLPGPGRPPPPPTKPPETEAQRGP) is disordered. Residues 279 to 289 (PGRPPPPPTKP) show a composition bias toward pro residues.

Belongs to the pseudouridine synthase RluA family.

The polypeptide is RNA pseudouridylate synthase domain-containing protein 1 (RPUSD1) (Homo sapiens (Human)).